Consider the following 202-residue polypeptide: Orotate phosphoribosyltransferase (202 aa).

113-121 (EDIITTGGS) contributes to the 5-phospho-alpha-D-ribose 1-diphosphate binding site. Orotate contacts are provided by threonine 117 and arginine 145.

It belongs to the purine/pyrimidine phosphoribosyltransferase family. PyrE subfamily. In terms of assembly, homodimer. The cofactor is Mg(2+).

The enzyme catalyses orotidine 5'-phosphate + diphosphate = orotate + 5-phospho-alpha-D-ribose 1-diphosphate. It participates in pyrimidine metabolism; UMP biosynthesis via de novo pathway; UMP from orotate: step 1/2. Functionally, catalyzes the transfer of a ribosyl phosphate group from 5-phosphoribose 1-diphosphate to orotate, leading to the formation of orotidine monophosphate (OMP). This chain is Orotate phosphoribosyltransferase, found in Nitratiruptor sp. (strain SB155-2).